A 505-amino-acid polypeptide reads, in one-letter code: Catalase (505 aa).

The interval 1 to 25 is disordered; the sequence is MSQQDKKLTGVFGHPVSDRENSMTA. Active-site residues include histidine 56 and asparagine 129. Position 339 (tyrosine 339) interacts with heme.

The protein belongs to the catalase family. In terms of assembly, homodimer. Requires heme as cofactor.

It carries out the reaction 2 H2O2 = O2 + 2 H2O. Its function is as follows. Decomposes hydrogen peroxide into water and oxygen; serves to protect cells from the toxic effects of hydrogen peroxide. In Staphylococcus aureus, this protein is Catalase (katA).